Consider the following 179-residue polypeptide: Large ribosomal subunit protein uL5 (179 aa).

This sequence belongs to the universal ribosomal protein uL5 family. As to quaternary structure, part of the 50S ribosomal subunit; part of the 5S rRNA/L5/L18/L25 subcomplex. Contacts the 5S rRNA and the P site tRNA. Forms a bridge to the 30S subunit in the 70S ribosome.

In terms of biological role, this is one of the proteins that bind and probably mediate the attachment of the 5S RNA into the large ribosomal subunit, where it forms part of the central protuberance. In the 70S ribosome it contacts protein S13 of the 30S subunit (bridge B1b), connecting the 2 subunits; this bridge is implicated in subunit movement. Contacts the P site tRNA; the 5S rRNA and some of its associated proteins might help stabilize positioning of ribosome-bound tRNAs. The polypeptide is Large ribosomal subunit protein uL5 (Shewanella denitrificans (strain OS217 / ATCC BAA-1090 / DSM 15013)).